Consider the following 135-residue polypeptide: Ribosome-binding factor A (135 aa).

The protein belongs to the RbfA family. In terms of assembly, monomer. Binds 30S ribosomal subunits, but not 50S ribosomal subunits or 70S ribosomes.

Its subcellular location is the cytoplasm. Functionally, one of several proteins that assist in the late maturation steps of the functional core of the 30S ribosomal subunit. Associates with free 30S ribosomal subunits (but not with 30S subunits that are part of 70S ribosomes or polysomes). Required for efficient processing of 16S rRNA. May interact with the 5'-terminal helix region of 16S rRNA. This chain is Ribosome-binding factor A, found in Rhizobium meliloti (strain 1021) (Ensifer meliloti).